We begin with the raw amino-acid sequence, 1123 residues long: Adenylyl cyclase X E (1123 aa).

At 1 to 47 (MPRSLGNCQLNYSKERMWEPGYLKAKCAELRLESEFRLYRIRLWKSY) the chain is on the cytoplasmic side. Residues 48 to 68 (LLTFFMLHIFVTSVHCALLLA) form a helical membrane-spanning segment. The Extracellular segment spans residues 69–73 (TIERR). Residues 74 to 94 (SIIYFDVALSIGCALVLILVL) form a helical membrane-spanning segment. At 95 to 106 (SVNFCDEFIAKH) the chain is on the cytoplasmic side. The helical transmembrane segment at 107–127 (TWYMYASSIFASLTLVFADLT) threads the bilayer. Residues 128–137 (ESIYHTYAHS) are Extracellular-facing. The chain crosses the membrane as a helical span at residues 138–158 (WILGTFYDTYIIYMIYMFLPI). Residues 159-163 (HFISG) are Cytoplasmic-facing. Residues 164-184 (AVLLALLVSGLYILYFVIFIA) form a helical membrane-spanning segment. Residues 185 to 196 (QGFAQFASALFS) lie on the Extracellular side of the membrane. Residues 197–217 (VGGMSVDIVHYLCLNLVGIFY) traverse the membrane as a helical segment. Over 218 to 581 (RVMNDTVVRS…YLKQTDYMYK (364 aa)) the chain is Cytoplasmic. Residues 346–348 (LGD) and Arg392 each bind ATP. Position 348 (Asp348) interacts with Mg(2+). Residues 582 to 602 (YSIILSASVGCSLVYIELMDT) traverse the membrane as a helical segment. The Extracellular portion of the chain corresponds to 603–608 (QMICSS). Residues 609 to 629 (CFVLPASVATIQCILALIAWY) traverse the membrane as a helical segment. The Cytoplasmic portion of the chain corresponds to 630–667 (KKYCWTRYGRNNVPHHYNGFSCFIFRIHDKILNSLPIR). Residues 668 to 688 (ICIYLFLMISSFFVMCLIVMS) traverse the membrane as a helical segment. At 689 to 719 (CQREEFEMAYIEERLFHYEQEAHICFHPWVT) the chain is on the extracellular side. A helical membrane pass occupies residues 720-740 (TNMLSLMICLTFTFAHIPIMV). The Cytoplasmic portion of the chain corresponds to 741 to 743 (KTA). The chain crosses the membrane as a helical span at residues 744–764 (VAILETLAYLLLIFFQFDFVF). At 765–772 (HHSVTTNP) the chain is on the extracellular side. A helical transmembrane segment spans residues 773–793 (YFKSEYAHALLICITFLIMFV). Over 794-1123 (KERQIEFTNK…STSRHTLQSL (330 aa)) the chain is Cytoplasmic. Residues Lys903, 1014–1016 (DIW), 1021–1025 (NMASR), and Lys1061 contribute to the ATP site.

The protein belongs to the adenylyl cyclase class-4/guanylyl cyclase family. In terms of tissue distribution, expressed in labella.

It is found in the membrane. The catalysed reaction is ATP = 3',5'-cyclic AMP + diphosphate. In terms of biological role, catalyzes the formation of the signaling molecule cAMP in response to G-protein signaling. This chain is Adenylyl cyclase X E, found in Drosophila melanogaster (Fruit fly).